A 142-amino-acid chain; its full sequence is Large ribosomal subunit protein uL13 (142 aa).

Belongs to the universal ribosomal protein uL13 family. In terms of assembly, part of the 50S ribosomal subunit.

Its function is as follows. This protein is one of the early assembly proteins of the 50S ribosomal subunit, although it is not seen to bind rRNA by itself. It is important during the early stages of 50S assembly. This chain is Large ribosomal subunit protein uL13, found in Histophilus somni (strain 129Pt) (Haemophilus somnus).